Consider the following 111-residue polypeptide: Large ribosomal subunit protein uL22 (111 aa).

It belongs to the universal ribosomal protein uL22 family. In terms of assembly, part of the 50S ribosomal subunit.

In terms of biological role, this protein binds specifically to 23S rRNA; its binding is stimulated by other ribosomal proteins, e.g. L4, L17, and L20. It is important during the early stages of 50S assembly. It makes multiple contacts with different domains of the 23S rRNA in the assembled 50S subunit and ribosome. Functionally, the globular domain of the protein is located near the polypeptide exit tunnel on the outside of the subunit, while an extended beta-hairpin is found that lines the wall of the exit tunnel in the center of the 70S ribosome. The protein is Large ribosomal subunit protein uL22 of Clostridium acetobutylicum (strain ATCC 824 / DSM 792 / JCM 1419 / IAM 19013 / LMG 5710 / NBRC 13948 / NRRL B-527 / VKM B-1787 / 2291 / W).